The sequence spans 280 residues: Antiactivator FleN (280 aa).

Residues 19–26, E153, N181, 215–217, and R221 contribute to the ATP site; these read KGGVGKTN and PYD.

Belongs to the ParA family. In terms of assembly, forms homodimers. Interacts with FleQ.

With respect to regulation, ATP-binding allows dimerization and subsequent antagonistic effect against FleQ. Functionally, ATPase that plays an important role in maintaining flagellar number in Pseudomonas aeruginosa. Exhibits anti-activator activity against FleQ, the global transcriptional regulator of flagellar genes. The sequence is that of Antiactivator FleN from Pseudomonas aeruginosa (strain ATCC 15692 / DSM 22644 / CIP 104116 / JCM 14847 / LMG 12228 / 1C / PRS 101 / PAO1).